The primary structure comprises 624 residues: Fibronectin type III domain-containing protein 2 (624 aa).

The first 19 residues, 1–19 (MREQFSVLVISLLFSSSYG), serve as a signal peptide directing secretion. Fibronectin type-III domains follow at residues 131–236 (PPQN…TPDI), 240–330 (EPTN…TDVF), 334–430 (MPRF…TVPT), 431–524 (VPRE…PKRD), and 527–624 (VPPN…WPGR).

Prismatic layer of shell (at protein level).

The protein resides in the secreted. The protein is Fibronectin type III domain-containing protein 2 of Margaritifera margaritifera (Freshwater pearl mussel).